A 105-amino-acid chain; its full sequence is Iron-sulfur cluster assembly protein CyaY (105 aa).

The protein belongs to the frataxin family.

Its function is as follows. Involved in iron-sulfur (Fe-S) cluster assembly. May act as a regulator of Fe-S biogenesis. This is Iron-sulfur cluster assembly protein CyaY from Dechloromonas aromatica (strain RCB).